Consider the following 381-residue polypeptide: Anhydro-N-acetylmuramic acid kinase (381 aa).

13 to 20 contacts ATP; the sequence is GTSLDGID.

This sequence belongs to the anhydro-N-acetylmuramic acid kinase family.

It catalyses the reaction 1,6-anhydro-N-acetyl-beta-muramate + ATP + H2O = N-acetyl-D-muramate 6-phosphate + ADP + H(+). It functions in the pathway amino-sugar metabolism; 1,6-anhydro-N-acetylmuramate degradation. The protein operates within cell wall biogenesis; peptidoglycan recycling. Catalyzes the specific phosphorylation of 1,6-anhydro-N-acetylmuramic acid (anhMurNAc) with the simultaneous cleavage of the 1,6-anhydro ring, generating MurNAc-6-P. Is required for the utilization of anhMurNAc either imported from the medium or derived from its own cell wall murein, and thus plays a role in cell wall recycling. The protein is Anhydro-N-acetylmuramic acid kinase of Francisella tularensis subsp. novicida (strain U112).